Reading from the N-terminus, the 492-residue chain is MNTYELISSLKIKQQIGKLPNTISSISHNSRQVDDNSLFICISGFTVDGHNFVAEAVENGATCIVAEREVNLDTNKATLIIVPDTNKAIATLAATFYKHPSHNLTIYGVTGTNGKTTVTTIINHLLTDNELSTALIGTNGFQINKDIYSSSNNTTSDVLTNQHMLYEAKNQGVTHVAMEVSSHGLEQGRLWGIDFTVATFTNLSHEHLDYHGSMEEYAATKVQLFSSLAIQPNKQKIAVLNRDDNWYEYFQKRTPVQIVSYGIYEQADFRATAIKYYKDRTSFELLTPEGSFQVQTKLMGEFNVYNVLAAIASVYVKESIPLTDLVKSIEGTPTPPGRMEKLESSGNRHIYIDYAHTPDALTKAINSLLPFKQNKLIVVVGTGGDRDKSIRPLLAKAASVADYVILTINDPRHEDPNNILQDLENGMLHHQYTCLENRKEAIREAINYSSPNDIILIAGKGKEPYQIIKNKKVAHNDATIALECSNELFPNI.

Serine 30 serves as a coordination point for UDP-N-acetyl-alpha-D-muramoyl-L-alanyl-D-glutamate. An ATP-binding site is contributed by 111 to 117; it reads GTNGKTT. UDP-N-acetyl-alpha-D-muramoyl-L-alanyl-D-glutamate contacts are provided by residues 154–155, serine 181, glutamine 187, and arginine 189; that span reads TT. Lysine 221 carries the post-translational modification N6-carboxylysine.

This sequence belongs to the MurCDEF family. MurE subfamily. Carboxylation is probably crucial for Mg(2+) binding and, consequently, for the gamma-phosphate positioning of ATP.

The protein localises to the cytoplasm. Its pathway is cell wall biogenesis; peptidoglycan biosynthesis. In terms of biological role, catalyzes the addition of an amino acid to the nucleotide precursor UDP-N-acetylmuramoyl-L-alanyl-D-glutamate (UMAG) in the biosynthesis of bacterial cell-wall peptidoglycan. This chain is UDP-N-acetylmuramyl-tripeptide synthetase 2, found in Oceanobacillus iheyensis (strain DSM 14371 / CIP 107618 / JCM 11309 / KCTC 3954 / HTE831).